The following is a 623-amino-acid chain: Chaperone protein HtpG (623 aa).

An a; substrate-binding region spans residues 1–330 (MIMTQEKKKF…SEDLPLNISR (330 aa)). The tract at residues 331 to 546 (ESLQHNSVLE…DAAMDIRMER (216 aa)) is b. Positions 477–497 (SDIDVEQTTSQSEEKNTDSKK) are disordered. Positions 488 to 497 (SEEKNTDSKK) are enriched in basic and acidic residues. A c region spans residues 547-623 (FLIEQKQIAN…LNDIVQKAIL (77 aa)).

It belongs to the heat shock protein 90 family. In terms of assembly, homodimer.

Its subcellular location is the cytoplasm. Its function is as follows. Molecular chaperone. Has ATPase activity. This is Chaperone protein HtpG from Rickettsia massiliae (strain Mtu5).